The primary structure comprises 727 residues: NADH-ubiquinone oxidoreductase 75 kDa subunit, mitochondrial (727 aa).

The transit peptide at 1–23 directs the protein to the mitochondrion; that stretch reads MLRIPVRKALVGLSKSPKGCVRT. Residues 30–108 form the 2Fe-2S ferredoxin-type domain; it reads NLIEVFVDGQ…GWNILTNSEK (79 aa). Residues Cys-64, Cys-75, and Cys-78 each contribute to the [2Fe-2S] cluster site. The residue at position 84 (Lys-84) is an N6-acetyllysine. Cys-92 contacts [2Fe-2S] cluster. In terms of domain architecture, 4Fe-4S His(Cys)3-ligated-type spans 108 to 147; that stretch reads KSKKAREGVMEFLLANHPLDCPICDQGGECDLQDQSMMFG. His-124, Cys-128, Cys-131, Cys-137, Cys-176, Cys-179, Cys-182, and Cys-226 together coordinate [4Fe-4S] cluster. A 4Fe-4S Mo/W bis-MGD-type domain is found at 245-301; sequence TRKTESIDVMDAVGSNIVVSTRTGEVMRILPRMHEDINEXWISDKTRFAYDGLKRQR. Residues Lys-467, Lys-499, and Lys-709 each carry the N6-acetyllysine modification.

It belongs to the complex I 75 kDa subunit family. As to quaternary structure, core subunit of respiratory chain NADH dehydrogenase (Complex I) which is composed of 45 different subunits. This is the largest subunit of complex I and it is a component of the iron-sulfur (IP) fragment of the enzyme. Complex I associates with ubiquinol-cytochrome reductase complex (Complex III) to form supercomplexes. Interacts with MDM2 and AKAP1. It depends on [2Fe-2S] cluster as a cofactor. The cofactor is [4Fe-4S] cluster.

The protein localises to the mitochondrion inner membrane. It catalyses the reaction a ubiquinone + NADH + 5 H(+)(in) = a ubiquinol + NAD(+) + 4 H(+)(out). Functionally, core subunit of the mitochondrial membrane respiratory chain NADH dehydrogenase (Complex I) which catalyzes electron transfer from NADH through the respiratory chain, using ubiquinone as an electron acceptor. Essential for catalysing the entry and efficient transfer of electrons within complex I. Plays a key role in the assembly and stability of complex I and participates in the association of complex I with ubiquinol-cytochrome reductase complex (Complex III) to form supercomplexes. The polypeptide is NADH-ubiquinone oxidoreductase 75 kDa subunit, mitochondrial (NDUFS1) (Gorilla gorilla gorilla (Western lowland gorilla)).